Reading from the N-terminus, the 460-residue chain is UDP-N-acetylmuramate--L-alanine ligase (460 aa).

An ATP-binding site is contributed by 119-125 (GSHGKTT).

The protein belongs to the MurCDEF family.

Its subcellular location is the cytoplasm. The enzyme catalyses UDP-N-acetyl-alpha-D-muramate + L-alanine + ATP = UDP-N-acetyl-alpha-D-muramoyl-L-alanine + ADP + phosphate + H(+). It functions in the pathway cell wall biogenesis; peptidoglycan biosynthesis. Its function is as follows. Cell wall formation. The chain is UDP-N-acetylmuramate--L-alanine ligase from Alkaliphilus metalliredigens (strain QYMF).